The primary structure comprises 265 residues: uncharacterized protein (265 aa).

Positions 1–160 (MDKSKNLFDL…STEPVVAAPV (160 aa)) are disordered. Over residues 28–42 (AAAAPVAAKKPVAPK) the composition is skewed to low complexity. 2 stretches are compositionally biased toward basic and acidic residues: residues 73–85 (SEER…DSKS) and 102–119 (RQFD…ENKK).

The protein belongs to the SERBP1-HABP4 family.

Its function is as follows. Ribosome-binding protein that acts as a regulator of mRNA translation by promoting ribosome inactivation. This is an uncharacterized protein from Dictyostelium discoideum (Social amoeba).